We begin with the raw amino-acid sequence, 416 residues long: RNA polymerase sigma factor SigA (416 aa).

The interval 184–254 is sigma-70 factor domain-2; sequence MVQSNLRLVV…TRAIADQSRT (71 aa). The Interaction with polymerase core subunit RpoC signature appears at 208–211; that stretch reads DLIQ. Residues 263–338 form a sigma-70 factor domain-3 region; the sequence is ETISRIKKTT…EADGETPEDE (76 aa). Residues 351-404 form a sigma-70 factor domain-4 region; that stretch reads VLDTLSPRERDVLRLRYGLDDGRMKTLEEIGQIFNVTRERIRQIEAKALRKLRH. The segment at residues 377–396 is a DNA-binding region (H-T-H motif); that stretch reads LEEIGQIFNVTRERIRQIEA.

The protein belongs to the sigma-70 factor family. RpoD/SigA subfamily. Interacts transiently with the RNA polymerase catalytic core.

The protein localises to the cytoplasm. In terms of biological role, sigma factors are initiation factors that promote the attachment of RNA polymerase to specific initiation sites and are then released. This sigma factor is the primary sigma factor during exponential growth. In Microcystis aeruginosa, this protein is RNA polymerase sigma factor SigA.